Here is a 662-residue protein sequence, read N- to C-terminus: MDKKKLIEELVEELNKYAYEYYVLGNSSVTDKDYDKKYYELVDLEKETGYKLPYSPTQRVGDVILPEFKKYTHKARLWSLDKAQTLEEIREWHNRNVKFLEEYNRTSDEELPPLKYILTKKFDGLTINLSYDENGVLVTGATRGTGAIGEDVTAQVKTIKSIPLKIDCHDFLEIHGEAIMTTEAFEKYNSEAETPLKNLRNGAAGALRNLNVAETAKRNLSAFFYDVGYKEGAPFKTYMEMLNFIKTKGFPMDDYIRECTTLDEIQKEIDYIRDIRFDLNYDIDGLVIAIDDIRTRDLLGYTVKFPKWAIAYKFEAQEATTKLLDVEWNVGRSGRVSPTAILEPVELAGVTVKRATLNNMDDIARKGVRLGAEVFVRRSNDVIPEIMGVVPESLEGTKEIEEPKVCPACGAHLVHEGVHIYCENTLGCKPQMVKTIVHFAGREAMNIAGFSEKTAEQLFEKLDIRDISDLYKLEYEKLLDLDKFGPKKAQNLLDAIEKSKDCTLEAFLYSLGIPNVGVKTAKDLVKRFESLENLEKATFEELVSVQDVGDIVARSIIEFFKEERTLKVINELLSLGVNPHYEKKEVLESPFMGKTVVVTGTLENYSRTSIKEKLESLGAKVSGSVSKKTDFVIAGEAAGSKYDKAKSLGVTILSEEEFENMI.

NAD(+)-binding positions include 31 to 35 and 79 to 80; these read DKDYD and SL. Residue Lys-121 is the N6-AMP-lysine intermediate of the active site. NAD(+)-binding residues include Arg-143, Glu-177, and Lys-313. Zn(2+) is bound by residues Cys-406, Cys-409, Cys-422, and Cys-428. The 77-residue stretch at 586–662 folds into the BRCT domain; it reads VLESPFMGKT…LSEEEFENMI (77 aa).

Belongs to the NAD-dependent DNA ligase family. LigA subfamily. The cofactor is Mg(2+). It depends on Mn(2+) as a cofactor.

The enzyme catalyses NAD(+) + (deoxyribonucleotide)n-3'-hydroxyl + 5'-phospho-(deoxyribonucleotide)m = (deoxyribonucleotide)n+m + AMP + beta-nicotinamide D-nucleotide.. In terms of biological role, DNA ligase that catalyzes the formation of phosphodiester linkages between 5'-phosphoryl and 3'-hydroxyl groups in double-stranded DNA using NAD as a coenzyme and as the energy source for the reaction. It is essential for DNA replication and repair of damaged DNA. This Clostridium perfringens (strain 13 / Type A) protein is DNA ligase.